We begin with the raw amino-acid sequence, 513 residues long: MEECKLDINKGKDAEILYEEYKYHEIKEMSFSSCARTSPELLKKFGCDAHVITSVEGAPKKENKKIWEFFKGSNKIKNLFTMFTCCFANDEEEIWGEETNESVVYKEYTYNSRWKIEIPSYPVREIPYVVADTPYNKLLCPLSSLEWVSKLILMDNANSIGMKNNRYSTNPFIYGMCYIIRNNANRILLESCYCENSTGMSTCPRILEFMPYEPLLKYNSYRLLSTYENSYKELSEMLTNNNAPLEVLIHHVMLYHYYPSFLQSALWTAVSSYLEERCNNGLYSKLLVKAAKQHFGDIRLYFVTPDDIYTFDHCNNWIAIVTRNFMAYIETKRKLEFDSIPFNCPLITQLFPLISSPKEMAWLLLIVCTDSNESWFPVHAYINTKTRILRPRSPKLDFFLKESDLLYFQDKQSISEFDIIRKDLLEDLIQCDSYVNTREQLRRRRETLNRKRITIAKLQNNHSQITFPYKRHNIHKSVDSIQFCKPASNLLTLKDNSYTQIPLEPLLLAEISV.

Belongs to the UPF0300 family.

The protein localises to the golgi apparatus. It localises to the vacuole membrane. Functionally, has a role in meiosis. In Schizosaccharomyces pombe (strain 972 / ATCC 24843) (Fission yeast), this protein is Meiotically up-regulated gene 133 protein (mug133).